The primary structure comprises 480 residues: Zinc finger protein ztf-16 (480 aa).

A C2H2-type 1 zinc finger spans residues 5–27; the sequence is NACTECGFTTTVFSEFQGHIEKH. A disordered region spans residues 25–75; it reads EKHENEHSRSSSGEMSNSQTIEWGDGIQSSTPSPRSTPPSDPTPSPDSDEH. A compositionally biased stretch (polar residues) spans 34–45; that stretch reads SSSGEMSNSQTI. Residues 59-69 are compositionally biased toward pro residues; sequence RSTPPSDPTPS. 5 C2H2-type zinc fingers span residues 103 to 125, 133 to 155, 161 to 183, 190 to 215, and 223 to 246; these read HVCP…LEAH, YQCD…RMRH, YECR…SMTH, FDCP…EETH, and ASCK…QTRH. Disordered regions lie at residues 243-275, 290-311, and 376-417; these read QTRH…MDPA, EFSP…DKIP, and TSSS…KEDE. Basic and acidic residues predominate over residues 244 to 259; it reads TRHDDSESSPKKENTP. Low complexity-rich tracts occupy residues 292-305 and 376-403; these read SPPN…STSS and TSSS…SLSL. Residues 404-413 are compositionally biased toward basic and acidic residues; the sequence is TEKEKSPTPE. C2H2-type zinc fingers lie at residues 420–442 and 448–472; these read VECC…KSLH and FKCA…FADH.

It belongs to the Ikaros C2H2-type zinc-finger protein family. Expressed in the somatic gonad, hypodermis and cells in the head and tail. Expressed in amphid and phasmid sheath glia, amphid and phasmid socket glia, and in neurons in the head.

The protein resides in the nucleus. In terms of biological role, positively regulates the expression of ver-1 in the amphid sheath glia of amphid sensory neurons. Together with ehn-3, plays a role in somatic gonad development and is required for proper gonadal primordium assembly and somatic gonad precursor cell morphology. This is Zinc finger protein ztf-16 from Caenorhabditis elegans.